Consider the following 378-residue polypeptide: Protein arginine N-methyltransferase 6 (378 aa).

The tract at residues 1–46 (MSLSKKRKLESGDSGGAGAGGEGAEEENGGEQEAAPPRPRRTKSER) is disordered. The segment covering 13–22 (DSGGAGAGGE) has biased composition (gly residues). R38 carries the asymmetric dimethylarginine; by autocatalysis modification. In terms of domain architecture, SAM-dependent MTase PRMT-type spans 47–377 (DQLYYECYSD…EEKTKDFAME (331 aa)). S-adenosyl-L-methionine is bound by residues H60, R69, G93, E115, and E144. Active-site residues include E158 and E167.

It belongs to the class I-like SAM-binding methyltransferase superfamily. Protein arginine N-methyltransferase family. PRMT6 subfamily. As to quaternary structure, interacts with (and methylates) HIV-1 Tat, Rev and Nucleocapsid protein p7 (NC). Interacts with EPB41L3 and NCOA1. Automethylation enhances its stability.

The protein resides in the nucleus. It carries out the reaction L-arginyl-[protein] + 2 S-adenosyl-L-methionine = N(omega),N(omega)-dimethyl-L-arginyl-[protein] + 2 S-adenosyl-L-homocysteine + 2 H(+). Its function is as follows. Arginine methyltransferase that can catalyze the formation of both omega-N monomethylarginine (MMA) and asymmetrical dimethylarginine (aDMA), with a strong preference for the formation of aDMA. Preferentially methylates arginyl residues present in a glycine and arginine-rich domain and displays preference for monomethylated substrates. Specifically mediates the asymmetric dimethylation of histone H3 'Arg-2' to form H3R2me2a. H3R2me2a represents a specific tag for epigenetic transcriptional repression and is mutually exclusive with methylation on histone H3 'Lys-4' (H3K4me2 and H3K4me3). Acts as a transcriptional repressor of various genes such as HOXA2, THBS1 and TP53. Repression of TP53 blocks cellular senescence. Also methylates histone H2A and H4 'Arg-3' (H2AR3me and H4R3me, respectively). Acts as a regulator of DNA base excision during DNA repair by mediating the methylation of DNA polymerase beta (POLB), leading to the stimulation of its polymerase activity by enhancing DNA binding and processivity. Methylates HMGA1. Regulates alternative splicing events. Acts as a transcriptional coactivator of a number of steroid hormone receptors including ESR1, ESR2, PGR and NR3C1. Promotes fasting-induced transcriptional activation of the gluconeogenic program through methylation of the CRTC2 transcription coactivator. Methylates GPS2, protecting GPS2 from ubiquitination and degradation. Methylates SIRT7, inhibiting SIRT7 histone deacetylase activity and promoting mitochondria biogenesis. The polypeptide is Protein arginine N-methyltransferase 6 (Prmt6) (Mus musculus (Mouse)).